The following is a 429-amino-acid chain: Enolase (429 aa).

(2R)-2-phosphoglycerate is bound at residue glutamine 164. Glutamate 206 (proton donor) is an active-site residue. Residues aspartate 243, glutamate 286, and aspartate 313 each contribute to the Mg(2+) site. (2R)-2-phosphoglycerate-binding residues include lysine 338, arginine 367, serine 368, and lysine 389. Lysine 338 serves as the catalytic Proton acceptor.

Belongs to the enolase family. Mg(2+) serves as cofactor.

It is found in the cytoplasm. It localises to the secreted. The protein resides in the cell surface. The enzyme catalyses (2R)-2-phosphoglycerate = phosphoenolpyruvate + H2O. It participates in carbohydrate degradation; glycolysis; pyruvate from D-glyceraldehyde 3-phosphate: step 4/5. Functionally, catalyzes the reversible conversion of 2-phosphoglycerate (2-PG) into phosphoenolpyruvate (PEP). It is essential for the degradation of carbohydrates via glycolysis. This Thermotoga sp. (strain RQ2) protein is Enolase.